Reading from the N-terminus, the 245-residue chain is Polyhedrin (245 aa).

It belongs to the polyhedrin family.

Its function is as follows. Major component of the virus occlusion bodies, which are large proteinaceous structures (polyhedra), that protect the virus from the outside environment for extended periods until they are ingested by insect larvae. This chain is Polyhedrin, found in Lepidoptera (butterflies and moths).